Here is a 248-residue protein sequence, read N- to C-terminus: 1-(5-phosphoribosyl)-5-[(5-phosphoribosylamino)methylideneamino] imidazole-4-carboxamide isomerase (248 aa).

Asp7 (proton acceptor) is an active-site residue. Asp129 acts as the Proton donor in catalysis.

The protein belongs to the HisA/HisF family.

It localises to the cytoplasm. The enzyme catalyses 1-(5-phospho-beta-D-ribosyl)-5-[(5-phospho-beta-D-ribosylamino)methylideneamino]imidazole-4-carboxamide = 5-[(5-phospho-1-deoxy-D-ribulos-1-ylimino)methylamino]-1-(5-phospho-beta-D-ribosyl)imidazole-4-carboxamide. It participates in amino-acid biosynthesis; L-histidine biosynthesis; L-histidine from 5-phospho-alpha-D-ribose 1-diphosphate: step 4/9. The chain is 1-(5-phosphoribosyl)-5-[(5-phosphoribosylamino)methylideneamino] imidazole-4-carboxamide isomerase from Aeromonas salmonicida (strain A449).